The sequence spans 207 residues: N-(5'-phosphoribosyl)anthranilate isomerase (207 aa).

It belongs to the TrpF family.

The enzyme catalyses N-(5-phospho-beta-D-ribosyl)anthranilate = 1-(2-carboxyphenylamino)-1-deoxy-D-ribulose 5-phosphate. The protein operates within amino-acid biosynthesis; L-tryptophan biosynthesis; L-tryptophan from chorismate: step 3/5. This Legionella pneumophila (strain Lens) protein is N-(5'-phosphoribosyl)anthranilate isomerase.